We begin with the raw amino-acid sequence, 1494 residues long: DNA-directed RNA polymerase subunit beta' (1494 aa).

Zn(2+) contacts are provided by Cys67, Cys69, Cys82, and Cys85. Mg(2+)-binding residues include Asp499, Asp501, and Asp503. 4 residues coordinate Zn(2+): Cys868, Cys944, Cys951, and Cys954.

This sequence belongs to the RNA polymerase beta' chain family. As to quaternary structure, the RNAP catalytic core consists of 2 alpha, 1 beta, 1 beta' and 1 omega subunit. When a sigma factor is associated with the core the holoenzyme is formed, which can initiate transcription. Mg(2+) is required as a cofactor. Zn(2+) serves as cofactor.

The catalysed reaction is RNA(n) + a ribonucleoside 5'-triphosphate = RNA(n+1) + diphosphate. In terms of biological role, DNA-dependent RNA polymerase catalyzes the transcription of DNA into RNA using the four ribonucleoside triphosphates as substrates. In Chlorobaculum parvum (strain DSM 263 / NCIMB 8327) (Chlorobium vibrioforme subsp. thiosulfatophilum), this protein is DNA-directed RNA polymerase subunit beta'.